The following is a 1374-amino-acid chain: DNA-directed RNA polymerase subunit beta' (1374 aa).

The tract at residues 1-47 is disordered; it reads MTSTSPKSRKPSTKTTKSKSKSKSKSKAAKAAAASASPALARTPPQF. Positions 7–28 are enriched in basic residues; the sequence is KSRKPSTKTTKSKSKSKSKSKA. Residues 29–45 show a composition bias toward low complexity; that stretch reads AKAAAASASPALARTPP. Positions 258, 325, 332, and 335 each coordinate Zn(2+). The segment at 1343-1374 is disordered; the sequence is VRPTGENELEEEQLPDPSALEGLQQEGLLTEE. A compositionally biased stretch (low complexity) spans 1362–1374; sequence LEGLQQEGLLTEE.

Belongs to the RNA polymerase beta' chain family. RpoC2 subfamily. In cyanobacteria the RNAP catalytic core is composed of 2 alpha, 1 beta, 1 beta', 1 gamma and 1 omega subunit. When a sigma factor is associated with the core the holoenzyme is formed, which can initiate transcription. Zn(2+) is required as a cofactor.

It catalyses the reaction RNA(n) + a ribonucleoside 5'-triphosphate = RNA(n+1) + diphosphate. DNA-dependent RNA polymerase catalyzes the transcription of DNA into RNA using the four ribonucleoside triphosphates as substrates. The chain is DNA-directed RNA polymerase subunit beta' from Prochlorococcus marinus (strain MIT 9303).